Here is a 334-residue protein sequence, read N- to C-terminus: MRRAAVLTAGSWGTVFAKVLADAGARVTLFARDRAIADAINGRHVNPRYLADVRLPDLVRATSSPERALRDADLVVLAVPSQALRSCLVEWAPLVGPGAVYVSLMKGMEAGSSRRMSEVIAQAAGVGPERIAVVSGPNLAREIAVEHPAATVVASASAATAHAVQAACWTPYLRPYTNADVLGCELGGAVKNVIALAAGMLEGMGFGTNSLASLITRGLAETARLGTALGADPMTFAGLAGLGDLVATCGSPLSRNRTFGEKLGRGMTLDQVLAEQRQVAEGVRSCRPLLALADGLGVSMPITRQVERVLYEGLPPLEAVKDLMSREPGPEYRL.

NADPH is bound by residues S11, W12, R32, and K106. Residues K106 and G136 each contribute to the sn-glycerol 3-phosphate site. A140 is a binding site for NADPH. Sn-glycerol 3-phosphate-binding residues include K191, D244, S254, R255, and N256. K191 functions as the Proton acceptor in the catalytic mechanism. R255 is a binding site for NADPH. Positions 279 and 281 each coordinate NADPH.

It belongs to the NAD-dependent glycerol-3-phosphate dehydrogenase family.

Its subcellular location is the cytoplasm. The catalysed reaction is sn-glycerol 3-phosphate + NAD(+) = dihydroxyacetone phosphate + NADH + H(+). It carries out the reaction sn-glycerol 3-phosphate + NADP(+) = dihydroxyacetone phosphate + NADPH + H(+). It participates in membrane lipid metabolism; glycerophospholipid metabolism. Its function is as follows. Catalyzes the reduction of the glycolytic intermediate dihydroxyacetone phosphate (DHAP) to sn-glycerol 3-phosphate (G3P), the key precursor for phospholipid synthesis. This Parafrankia sp. (strain EAN1pec) protein is Glycerol-3-phosphate dehydrogenase [NAD(P)+].